The chain runs to 410 residues: Lipid droplet-regulating VLDL assembly factor AUP1 (410 aa).

Met1 is subject to N-acetylmethionine. The Cytoplasmic segment spans residues 1-20 (MEPPPAPGPERLFDSHRLPS). Residues 21–41 (DGFLLLALLLYAPVGLCLLVL) lie within the membrane without spanning it. Residues 42-410 (RLFLGLHVFL…FRERQAQEAE (369 aa)) are Cytoplasmic-facing. Positions 259-293 (LTPADKAEHMKRQRHPRLRPQSVQSSFPSPPSPSS) are disordered. Residue Ser292 is modified to Phosphoserine. The CUE domain occupies 296–338 (QLTILAQRVKEVLPHVPLNVIQRDLARTGCVDLTITNLLEGAV). Residues 348 to 367 (GSQSLPTASAPKFPSSGLVT) form a disordered region. A Phosphoserine modification is found at Ser363. A Phosphothreonine modification is found at Thr367.

The protein belongs to the AUP1 family. Identified in a complex that contains SEL1L, OS9, FAF2/UBXD8, UBE2J1/UBC6E and AUP1. Interacts with the cytoplasmic tail of ITGA2B, ITGA1, ITGA2, ITGA5, ITGAV and ITGAM. Interacts (via C-terminus) with UBE2G2; the interaction recruits UBE2G2 to lipid droplets. Interacts with ubiquitin ligases AMFR/gp78 and RNF139/TRC8; this promotes interaction of UBE2G2 with AMFR and RNF139. Interacts with apolipoprotein APOB. In terms of processing, monoubiquitinated and diubiquitinated.

The protein localises to the endoplasmic reticulum membrane. It localises to the lipid droplet. Its function is as follows. Plays a role in the translocation of terminally misfolded proteins from the endoplasmic reticulum lumen to the cytoplasm and their degradation by the proteasome. Plays a role in lipid droplet formation. Induces lipid droplet clustering. Recruits ubiquitin-conjugating enzyme UBE2G2 to lipid droplets which facilitates its interaction with ubiquitin ligases AMFR/gp78 and RNF139/TRC8, leading to sterol-induced ubiquitination of HMGCR and its subsequent proteasomal degradation. Also required for the degradation of INSIG1, SREBF1 and SREBF2. Plays a role in regulating assembly and secretion of very low density lipoprotein particles and stability of apolipoprotein APOB. In Rattus norvegicus (Rat), this protein is Lipid droplet-regulating VLDL assembly factor AUP1.